A 414-amino-acid chain; its full sequence is 2,3-diketo-5-methylthiopentyl-1-phosphate enolase (414 aa).

Lys-99 acts as the Proton acceptor in catalysis. Substrate-binding positions include Lys-148, 174–177, His-265, Gly-338, and 360–361; these read KDDE and GG. Residues Lys-174, Asp-176, and Glu-177 each coordinate Mg(2+). Position 174 is an N6-carboxylysine (Lys-174).

This sequence belongs to the RuBisCO large chain family. Type IV subfamily. In terms of assembly, homodimer. The cofactor is Mg(2+).

It catalyses the reaction 5-methylsulfanyl-2,3-dioxopentyl phosphate = 2-hydroxy-5-methylsulfanyl-3-oxopent-1-enyl phosphate. The protein operates within amino-acid biosynthesis; L-methionine biosynthesis via salvage pathway; L-methionine from S-methyl-5-thio-alpha-D-ribose 1-phosphate: step 3/6. Its function is as follows. Catalyzes the enolization of 2,3-diketo-5-methylthiopentyl-1-phosphate (DK-MTP-1-P) into 2-hydroxy-3-keto-5-methylthiopentenyl-1-phosphate (HK-MTPenyl-1-P). This Bacillus cytotoxicus (strain DSM 22905 / CIP 110041 / 391-98 / NVH 391-98) protein is 2,3-diketo-5-methylthiopentyl-1-phosphate enolase.